We begin with the raw amino-acid sequence, 1032 residues long: FACT complex subunit ctc-2 (1032 aa).

A disordered region spans residues 446-513 (DEEEAQPTPK…QKEGLAKYAE (68 aa)). Over residues 476 to 508 (LRSERNTTVDEDADKRRREHQKELAQKKQKEGL) the composition is skewed to basic and acidic residues. 4 coiled-coil regions span residues 485-506 (DEDA…KQKE), 624-658 (DRYA…EQDK), 785-805 (RRRR…IAEA), and 949-1010 (EVEE…RKAK). The segment at 943–1032 (NDSDDDEVEE…ERAAPKKRRK (90 aa)) is disordered. Acidic residues-rich tracts occupy residues 944–979 (DSDD…DSEY) and 986–1004 (EASD…DWDE).

It belongs to the peptidase M24 family. SPT16 subfamily. Forms a stable heterodimer with ctc-1/pob3. The dimer of ctc-1 and ctc-2 weakly associates with multiple molecules of nhp-1/nhp6 to form the FACT complex.

It localises to the nucleus. Its subcellular location is the chromosome. Functionally, component of the FACT complex, a general chromatin factor that acts to reorganize nucleosomes. The FACT complex is involved in multiple processes that require DNA as a template such as mRNA elongation, DNA replication and DNA repair. During transcription elongation the FACT complex acts as a histone chaperone that both destabilizes and restores nucleosomal structure. It facilitates the passage of RNA polymerase II and transcription by promoting the dissociation of one histone H2A-H2B dimer from the nucleosome, then subsequently promotes the reestablishment of the nucleosome following the passage of RNA polymerase II. The chain is FACT complex subunit ctc-2 (ctc-2) from Neurospora crassa (strain ATCC 24698 / 74-OR23-1A / CBS 708.71 / DSM 1257 / FGSC 987).